A 119-amino-acid chain; its full sequence is Protein TusC (119 aa).

This sequence belongs to the DsrF/TusC family. In terms of assembly, heterohexamer, formed by a dimer of trimers. The hexameric TusBCD complex contains 2 copies each of TusB, TusC and TusD. The TusBCD complex interacts with TusE.

Its subcellular location is the cytoplasm. Part of a sulfur-relay system required for 2-thiolation of 5-methylaminomethyl-2-thiouridine (mnm(5)s(2)U) at tRNA wobble positions. The polypeptide is Protein TusC (Shigella sonnei (strain Ss046)).